The sequence spans 317 residues: Toluene-4-sulfonate monooxygenase system reductase subunit TsaB1 (317 aa).

Residues 2-108 (SADVPVTVAA…RATCSEMAPE (107 aa)) enclose the FAD-binding FR-type domain. Residue 110–220 (RRVLLLAGGI…PGSVRMERFK (111 aa)) coordinates NAD(+). A 2Fe-2S ferredoxin-type domain is found at 230-317 (QPFELVLQRA…CGGGRLVLDI (88 aa)). The [2Fe-2S] cluster site is built by C266, C271, C274, and C304.

Monomer. Part of the p-toluenesulfonate methyl-monooxygenase complex TsaBM, comprising the reductase TsaB and the oxygenase TsaM. FMN serves as cofactor.

Functionally, iron-sulfur flavoprotein carrying electrons from NADH to the oxygenase TsaM. Involved in the toluene-4-sulfonate degradation pathway. The chain is Toluene-4-sulfonate monooxygenase system reductase subunit TsaB1 (tsaB1) from Comamonas testosteroni (Pseudomonas testosteroni).